The sequence spans 329 residues: DNA-directed RNA polymerase subunit alpha (329 aa).

The segment at 1–235 is alpha N-terminal domain (alpha-NTD); it reads MQGSVTEFLK…EQLDAFVDLR (235 aa). Residues 249–329 are alpha C-terminal domain (alpha-CTD); the sequence is FDPILLRPVD…NWPPASIAED (81 aa).

Belongs to the RNA polymerase alpha chain family. In terms of assembly, homodimer. The RNAP catalytic core consists of 2 alpha, 1 beta, 1 beta' and 1 omega subunit. When a sigma factor is associated with the core the holoenzyme is formed, which can initiate transcription.

The enzyme catalyses RNA(n) + a ribonucleoside 5'-triphosphate = RNA(n+1) + diphosphate. In terms of biological role, DNA-dependent RNA polymerase catalyzes the transcription of DNA into RNA using the four ribonucleoside triphosphates as substrates. This chain is DNA-directed RNA polymerase subunit alpha, found in Pasteurella multocida (strain Pm70).